The following is a 546-amino-acid chain: Probable protein kinase UbiB (546 aa).

One can recognise a Protein kinase domain in the interval 123–501; it reads DFQEIPLASA…RTNHGQALFL (379 aa). ATP-binding positions include 129 to 137 and K152; that span reads LASASISQV. The Proton acceptor role is filled by D287. The next 2 membrane-spanning stretches (helical) occupy residues 497-517 and 521-541; these read QALF…FLYI and YLKI…TIGW.

It belongs to the ABC1 family. UbiB subfamily.

It localises to the cell inner membrane. It participates in cofactor biosynthesis; ubiquinone biosynthesis [regulation]. Is probably a protein kinase regulator of UbiI activity which is involved in aerobic coenzyme Q (ubiquinone) biosynthesis. The protein is Probable protein kinase UbiB of Blochmanniella pennsylvanica (strain BPEN).